A 100-amino-acid polypeptide reads, in one-letter code: Aspartyl/glutamyl-tRNA(Asn/Gln) amidotransferase subunit C (100 aa).

This sequence belongs to the GatC family. As to quaternary structure, heterotrimer of A, B and C subunits.

The enzyme catalyses L-glutamyl-tRNA(Gln) + L-glutamine + ATP + H2O = L-glutaminyl-tRNA(Gln) + L-glutamate + ADP + phosphate + H(+). It carries out the reaction L-aspartyl-tRNA(Asn) + L-glutamine + ATP + H2O = L-asparaginyl-tRNA(Asn) + L-glutamate + ADP + phosphate + 2 H(+). In terms of biological role, allows the formation of correctly charged Asn-tRNA(Asn) or Gln-tRNA(Gln) through the transamidation of misacylated Asp-tRNA(Asn) or Glu-tRNA(Gln) in organisms which lack either or both of asparaginyl-tRNA or glutaminyl-tRNA synthetases. The reaction takes place in the presence of glutamine and ATP through an activated phospho-Asp-tRNA(Asn) or phospho-Glu-tRNA(Gln). This is Aspartyl/glutamyl-tRNA(Asn/Gln) amidotransferase subunit C from Streptococcus sanguinis (strain SK36).